The sequence spans 434 residues: MKRNRLSFMNKVLLSSPAVKQPRLGCCSPLSQAHMRAARLDWGSLPHRVVLCVFQYLPLIDRARASSVCRRWNEVFHIPDLWRKFEFELNQSATSYFNSTHPDLIQQIIKKHAAHLQYVSFKVDSSTESAEAACGILSQLVNCSTQTLGLISTAKPSFMTMSKSHFVSALTVLFVNSKSLSSIKIEDTPVDDPSLSILVANNSDTLRRLKMSSCPHVSSDGILCVADHCQGLRELALNYYMLSDELLLALSNETHVNLEHLRIDVVSENPGQIEFHSIKRQSWDALIKHSPGVNVVMYFFLYEEEMETFFKEETPVTHLYFGRSVSKGILGRLSLNCPRLVELVVCANGIQVIDNELICIAEHCKNLTALGLSECEVSCTAFIEFVRLCGRKLTHLSIMEDVLIPDDVCSLDEIHTEVSKYLGRIWFPDVMPVW.

In terms of domain architecture, F-box spans 39–85; sequence RLDWGSLPHRVVLCVFQYLPLIDRARASSVCRRWNEVFHIPDLWRKF. LRR repeat units lie at residues 140-165, 187-213, 214-239, 242-265, 322-347, 349-374, and 375-400; these read LVNC…SKSH, DTPV…KMSS, CPHV…ALNY, LSDE…RIDV, GRSV…VVCA, GIQV…GLSE, and CEVS…SIME.

In terms of assembly, part of the SCF (SKP1-CUL1-F-box) E3 ubiquitin-protein ligase complex SCF(FBXL21) composed of CUL1, SKP1, RBX1 and FBXL21. Interacts with CRY2. Interacts with CRY1. As to expression, expressed in the adenohypophysis, hypothalamus (especially in the suprachiasmatic nucleus or nuclei, SCN) and pineal, all neuroendocrine structures associated with timing and homeostasis.

The protein resides in the cytoplasm. The protein localises to the cytosol. Its subcellular location is the nucleus. Its pathway is protein modification; protein ubiquitination. Substrate-recognition component of the SCF(FBXL21) E3 ubiquitin ligase complex involved in circadian rhythm function. Plays a key role in the maintenance of both the speed and the robustness of the circadian clock oscillation. The SCF(FBXL21) complex mainly acts in the cytosol and mediates ubiquitination of CRY proteins (CRY1 and CRY2), leading to CRY proteins stabilization. The SCF(FBXL21) complex counteracts the activity of the SCF(FBXL3) complex and protects CRY proteins from degradation. Involved in the hypothalamic suprachiasmatic nucleus (SCN) clock regulating temporal organization of the daily activities. This Ovis aries (Sheep) protein is F-box/LRR-repeat protein 21 (Fbxl21).